A 227-amino-acid chain; its full sequence is Fibrillarin-like rRNA/tRNA 2'-O-methyltransferase (227 aa).

Residues 86–87 (TT), 105–106 (EF), 130–131 (DA), and 150–153 (DVAQ) each bind S-adenosyl-L-methionine.

Belongs to the methyltransferase superfamily. Fibrillarin family. As to quaternary structure, interacts with nop5. Component of box C/D small ribonucleoprotein (sRNP) particles that contain rpl7ae, FlpA and nop5, plus a guide RNA.

In terms of biological role, involved in pre-rRNA and tRNA processing. Utilizes the methyl donor S-adenosyl-L-methionine to catalyze the site-specific 2'-hydroxyl methylation of ribose moieties in rRNA and tRNA. Site specificity is provided by a guide RNA that base pairs with the substrate. Methylation occurs at a characteristic distance from the sequence involved in base pairing with the guide RNA. This chain is Fibrillarin-like rRNA/tRNA 2'-O-methyltransferase, found in Pyrococcus abyssi (strain GE5 / Orsay).